A 314-amino-acid polypeptide reads, in one-letter code: NF-kappa-B inhibitor alpha (314 aa).

Residues Met1–Glu41 form a disordered region. A compositionally biased stretch (basic and acidic residues) spans Gly15–Glu41. A Glycyl lysine isopeptide (Lys-Gly) (interchain with G-Cter in SUMO); alternate cross-link involves residue Lys21. Residue Lys21 forms a Glycyl lysine isopeptide (Lys-Gly) (interchain with G-Cter in ubiquitin); alternate linkage. Residue Lys22 forms a Glycyl lysine isopeptide (Lys-Gly) (interchain with G-Cter in ubiquitin) linkage. Positions His30–Ser36 match the Destruction motif motif. Ser32 is subject to Phosphoserine; by IKKA and IKKB. Position 36 is a phosphoserine; by IKKA, IKKB, IKKE and TBK1 (Ser36). Tyr42 carries the phosphotyrosine; by Tyr-kinases modification. Residues Met45 to Leu54 carry the Nuclear export signal motif. Positions Leu110 to Ile120 match the Nuclear import signal motif. ANK repeat units lie at residues Leu110–Leu139, Arg143–Leu172, Asn182–Ala211, and Asn216–Arg245. 2 positions are modified to (3S)-3-hydroxyasparagine; by HIF1AN: Asn210 and Asn244. Phosphoserine; by CK2 is present on residues Ser283 and Ser288. A Phosphothreonine; by CK2 modification is found at Thr291. Residue Ser293 is modified to Phosphoserine; by CK2. At Thr296 the chain carries Phosphothreonine.

The protein belongs to the NF-kappa-B inhibitor family. In terms of assembly, interacts with RELA; the interaction requires the nuclear import signal. Part of a 70-90 kDa complex at least consisting of CHUK, IKBKB, NFKBIA, RELA, ELP1 and MAP3K14. Interacts with NKIRAS1 and NKIRAS2. Interacts with RWDD3; the interaction enhances sumoylation. Interacts with PRMT2. Interacts with PRKACA in platelets; this interaction is disrupted by thrombin and collagen. Interacts with MEFV. Interacts with DDRGK1; positively regulates NFKBIA phosphorylation and degradation. Interacts with HNRNPA2B1; the interaction may be mediated by the RRM2 domain of HNRNPA2B1, and HNRNPA2B1 may interact simultaneously with FAM76B and either NFKBIA or NFKBIE to form a complex. In terms of processing, phosphorylated at Ser-32 and Ser-36 by IKKA/CHUK and IKKB/IKBKB; disables inhibition of NF-kappa-B DNA-binding activity. Phosphorylation at positions 32 and 36 is prerequisite to recognition by the SCF(FBXW11) and SCF(BTRC) complexes, leading to polyubiquitination and subsequent degradation. Polyubiquitinated at Lys-21 and/or Lys-22 following phosphorylation at Ser-32 and Ser-36. Monoubiquitinated at Lys-21 and/or Lys-22 by UBE2D3. Ubiquitin chain elongation is then performed by CDC34 in cooperation with the SCF(FBXW11) E3 ligase complex, building ubiquitin chains from the UBE2D3-primed NFKBIA-linked ubiquitin. The resulting polyubiquitination leads to protein degradation. Also ubiquitinated by the SCF(BTRC) complex following stimulus-dependent phosphorylation at Ser-32 and Ser-36. Deubiquitinated by USP38, leading to NF-kappa-B inhibition. Post-translationally, sumoylated; sumoylation requires the presence of the nuclear import signal. Sumoylation blocks ubiquitination and proteasome-mediated degradation of the protein thereby increasing the protein stability. In terms of processing, hydroxylated by HIF1AN.

The protein localises to the cytoplasm. It localises to the nucleus. In terms of biological role, inhibits the activity of dimeric NF-kappa-B/REL complexes by trapping REL (RELA/p65 and NFKB1/p50) dimers in the cytoplasm by masking their nuclear localization signals. On cellular stimulation by immune and pro-inflammatory responses, becomes phosphorylated promoting ubiquitination and degradation, enabling the dimeric RELA to translocate to the nucleus and activate transcription. This is NF-kappa-B inhibitor alpha (NFKBIA) from Sus scrofa (Pig).